A 483-amino-acid chain; its full sequence is ATP-dependent RNA helicase DDX25 (483 aa).

At T49 the chain carries Phosphothreonine. The short motif at 61 to 74 (LAANSLLNKLIRQS) is the Nuclear export signal element. The Q motif motif lies at 97–125 (KTFEELRLKEELLKGIYAMGFNRPSKIQE). Residues 100–114 (EELRLKEELLKGIYA) carry the Nuclear localization signal motif. The Helicase ATP-binding domain maps to 130 to 300 (MMLAHPPQNL…ERIIPDPNVI (171 aa)). Position 143–150 (143–150 (SQSGTGKT)) interacts with ATP. Residues 247–250 (DEAD) carry the DEAD box motif. The Helicase C-terminal domain maps to 311 to 478 (NIRQYYVLCE…QLDPEDMDEI (168 aa)).

This sequence belongs to the DEAD box helicase family. In terms of processing, phosphorylated on threonine residues. The phosphorylated form is found in the cytoplasm but not in the nucleus. In terms of tissue distribution, isoform 1 is expressed in germ cells. Isoform 2 is highly expressed in Leydig cells and weakly expressed in the pituitary and hypothalamus. Isoform 3 is weakly expressed only in germ cells.

The protein resides in the cytoplasm. It is found in the nucleus. It catalyses the reaction ATP + H2O = ADP + phosphate + H(+). Its function is as follows. ATP-dependent RNA helicase. Required for mRNA export and translation regulation during spermatid development. This is ATP-dependent RNA helicase DDX25 (Ddx25) from Rattus norvegicus (Rat).